Consider the following 416-residue polypeptide: MFSFYFNDNKITKLLMVGYGSTGKSVCDFLANFIDITVDISQNDDEFVNYDLNSYDLITVSPGIPLNKSPYRALTKFKDKIVSDIDIFYQYIKDTKAKTIAVTGSNGKSTVVTMTDFVLKDLGYKSILVGNIGTPALNKIGEKFDYCVVEVSSFQINLFNCVRFDLGCIINVSPDHLDRYQNFEQYKQSKLNLAKFSNDFFVYDVHNGIKYAGEYQIIRGAIYRNSTKLLDIVETKLFGEHNLENIIVVLNILDRLGLDINQAIDSIKKFKGLEHRCKIIKKVNGTTYINDSKGTNVGATIAALNSITNSKNIILLLGGVAKGGDFSLMIKSLDKYVKYVYIYGVDKEYIESYIKGYCKYQLCNNMKQAFELASQKANSNEIVLLSPACASFDEFSGYAQRGEVFQNLVAQLEQKS.

Residue 104–110 (GSNGKST) participates in ATP binding.

This sequence belongs to the MurCDEF family.

Its subcellular location is the cytoplasm. The catalysed reaction is UDP-N-acetyl-alpha-D-muramoyl-L-alanine + D-glutamate + ATP = UDP-N-acetyl-alpha-D-muramoyl-L-alanyl-D-glutamate + ADP + phosphate + H(+). The protein operates within cell wall biogenesis; peptidoglycan biosynthesis. Its function is as follows. Cell wall formation. Catalyzes the addition of glutamate to the nucleotide precursor UDP-N-acetylmuramoyl-L-alanine (UMA). This chain is UDP-N-acetylmuramoylalanine--D-glutamate ligase, found in Francisella tularensis subsp. mediasiatica (strain FSC147).